A 497-amino-acid chain; its full sequence is Galactose-1-phosphate uridylyltransferase (497 aa).

It belongs to the galactose-1-phosphate uridylyltransferase type 2 family.

Its subcellular location is the cytoplasm. The catalysed reaction is alpha-D-galactose 1-phosphate + UDP-alpha-D-glucose = alpha-D-glucose 1-phosphate + UDP-alpha-D-galactose. The protein operates within carbohydrate metabolism; galactose metabolism. The sequence is that of Galactose-1-phosphate uridylyltransferase from Clostridium acetobutylicum (strain ATCC 824 / DSM 792 / JCM 1419 / IAM 19013 / LMG 5710 / NBRC 13948 / NRRL B-527 / VKM B-1787 / 2291 / W).